The sequence spans 271 residues: RxLR effector protein PITG_15679 (271 aa).

The first 18 residues, 1-18 (MKVLQLIALTALVSSCVA), serve as a signal peptide directing secretion. A RxLR-dEER motif is present at residues 49–69 (RSLRRYDLEGLDSVNSNREER). Residues 212–271 (RLLSANVVMRLNDKGEKQILLISSSNPKKGDFLLPKGGWDKGEDVKKAALREVIEEGGVR) enclose the Nudix hydrolase domain. The Nudix box motif lies at 248–269 (GGWDKGEDVKKAALREVIEEGG).

This sequence in the N-terminal section; belongs to the RxLR effector family. The protein in the C-terminal section; belongs to the Nudix hydrolase family.

The protein resides in the secreted. It localises to the host cytoplasm. Its subcellular location is the host nucleus. Effector that enhances P.infestans colonization of Nicotiana benthamiana leaves. The sequence is that of RxLR effector protein PITG_15679 from Phytophthora infestans (strain T30-4) (Potato late blight agent).